The primary structure comprises 319 residues: Beta-ketoacyl-[acyl-carrier-protein] synthase III (319 aa).

Residues Cys110 and His246 contribute to the active site. An ACP-binding region spans residues 247 to 251 (QANYR). Asn276 is an active-site residue.

The protein belongs to the thiolase-like superfamily. FabH family. Homodimer.

It localises to the cytoplasm. The enzyme catalyses malonyl-[ACP] + acetyl-CoA + H(+) = 3-oxobutanoyl-[ACP] + CO2 + CoA. It functions in the pathway lipid metabolism; fatty acid biosynthesis. In terms of biological role, catalyzes the condensation reaction of fatty acid synthesis by the addition to an acyl acceptor of two carbons from malonyl-ACP. Catalyzes the first condensation reaction which initiates fatty acid synthesis and may therefore play a role in governing the total rate of fatty acid production. Possesses both acetoacetyl-ACP synthase and acetyl transacylase activities. Its substrate specificity determines the biosynthesis of branched-chain and/or straight-chain of fatty acids. In Lactobacillus delbrueckii subsp. bulgaricus (strain ATCC 11842 / DSM 20081 / BCRC 10696 / JCM 1002 / NBRC 13953 / NCIMB 11778 / NCTC 12712 / WDCM 00102 / Lb 14), this protein is Beta-ketoacyl-[acyl-carrier-protein] synthase III.